The following is a 133-amino-acid chain: Type VI secretion amidase effector 2 protein (133 aa).

Residues Cys23 and His73 contribute to the active site.

The protein belongs to the cell wall amidase Dae2/Tae2-like family.

Its subcellular location is the host periplasm. It localises to the secreted. It functions in the pathway cell wall degradation; peptidoglycan degradation. In terms of biological role, toxic component of a contact-dependent interbacterial competition system (also called effector-immunity systems). Secreted by the SPI-6 type VI secretion system, probably into the periplasm of bacterial target cells. A cell wall amidase with specificity toward the D-meso-DAP-D-alanine bond (D-meso-diaminopimelic-D-alanine) found in peptidoglycan of Gram-negative bacteria. Toxicity is counteracted by a cognate immunity protein Tai2 (t2585), but not immunity proteins associated with a similar endopeptidase in other bacteria. In vitro degrades peptidoglycans from Gram-negative but not Gram-positive bacteria. The protein is Type VI secretion amidase effector 2 protein of Salmonella typhi.